Consider the following 160-residue polypeptide: Calcium and integrin-binding family member 3 (160 aa).

EF-hand domains follow at residues 39 to 74 (KDNP…MSEM), 76 to 111 (PRDL…LTRG), and 117 to 152 (EVTL…APDF). Ca(2+) contacts are provided by Asp-89, Asn-91, Asp-93, Tyr-95, Asp-100, Asp-130, Asp-132, Asp-134, Arg-136, and Asp-141.

Monomer and homodimer. Interacts with ITGA2B (via C-terminus cytoplasmic tail region); the interaction is stabilized/increased in a calcium and magnesium-dependent manner. Interacts with TMC1. Expressed in heart, liver and inner ear. In the inner ear, expressed in vestibule and basilar membrane cells. Expressed in megakaryocytes and endothelial cells.

Its function is as follows. Acts as an auxiliary subunit of the sensory mechanoelectrical transduction (MET) channel in hair cells. Plays a role in regulating hair cell MET channel localization and function. This Mus musculus (Mouse) protein is Calcium and integrin-binding family member 3 (Cib3).